The chain runs to 500 residues: Raftlin-2 (500 aa).

Residue Gly-2 is the site of N-myristoyl glycine attachment. The S-palmitoyl cysteine moiety is linked to residue Cys-3. Positions 203-236 (GHLSESGVEEEPQHESGQHQTERNSSPSYANPKR) are disordered. Positions 213–224 (EPQHESGQHQTE) are enriched in basic and acidic residues. Phosphoserine is present on Ser-404. Positions 406 to 500 (AQTPERKGSR…EEGVTQVTCM (95 aa)) are disordered. Thr-408 carries the post-translational modification Phosphothreonine. The segment covering 409-424 (PERKGSRLLKGEDRNK) has biased composition (basic and acidic residues). Residues 426–438 (SSRSLGLDTNASQ) show a composition bias toward polar residues. Ser-429 is modified (phosphoserine). A compositionally biased stretch (low complexity) spans 467-478 (SDSFSGFSSSDS).

The protein belongs to the raftlin family. As to expression, expressed in B-cells, heart, brain, spleen, large intestine and lung. Expressed in dendritic cells and macrophages.

It is found in the cell membrane. Upon bacterial lipopolysaccharide stimulation, mediates clathrin-dependent internalization of TLR4 in dendritic cells, resulting in activation of TICAM1-mediated signaling and subsequent IFNB1 production. May regulate B-cell antigen receptor-mediated signaling. The chain is Raftlin-2 (Rftn2) from Mus musculus (Mouse).